Here is an 80-residue protein sequence, read N- to C-terminus: Putative membrane protein insertion efficiency factor (80 aa).

The interval 61 to 80 (KTGKDPVPDHFSLKRNQEGE) is disordered. Residues 62-80 (TGKDPVPDHFSLKRNQEGE) show a composition bias toward basic and acidic residues.

Belongs to the UPF0161 family.

It is found in the cell membrane. Could be involved in insertion of integral membrane proteins into the membrane. The sequence is that of Putative membrane protein insertion efficiency factor from Streptococcus pneumoniae serotype 2 (strain D39 / NCTC 7466).